The chain runs to 444 residues: Divalent metal cation transporter MntH (444 aa).

11 consecutive transmembrane segments (helical) span residues 31 to 51, 68 to 88, 115 to 135, 146 to 166, 175 to 195, 212 to 232, 267 to 287, 303 to 323, 356 to 376, 381 to 401, and 413 to 433; these read GGHWWFRLLAFLGPGYMVSVG, FGYLLLSVILLSNLMAIVLQG, LALWGLCELAIIACDLAEVIG, IPLTLGAIITALDVVLVLLLM, AFVMALLLVIFVCFGIQIALA, VVTNPHALYLAIGIIGATVMP, VALMFALFINAAILILAAAVF, ALLAPMLGVGLASTLFAVALL, LLTRGIAIVPVVVVTWLYGEA, LLVLSQVVLSMQLPFAVIPLV, and LVAPAWLVRLAWVIALVIVGL.

Belongs to the NRAMP family.

It localises to the cell inner membrane. Functionally, h(+)-stimulated, divalent metal cation uptake system. This Xanthomonas campestris pv. campestris (strain ATCC 33913 / DSM 3586 / NCPPB 528 / LMG 568 / P 25) protein is Divalent metal cation transporter MntH.